The following is a 117-amino-acid chain: Probable non-functional immunoglobulin heavy variable 7-81 (117 aa).

Residues 1-19 (MDWTWSILFLVAAATGTYS) form the signal peptide. Residues 20 to 44 (QVQLVQSGHEVKQPGASVKVSCKAS) are framework-1. The Ig-like domain maps to 20–117 (QVQLVQSGHE…EDMAMYYCAR (98 aa)). A disulfide bond links Cys-41 and Cys-115. Residues 45–52 (GYSFTTYG) are complementarity-determining-1. Residues 53-69 (MNWVPQAPGQGLEWMGW) are framework-2. The tract at residues 70–77 (FNTYTGNP) is complementarity-determining-2. Asn-76 carries an N-linked (GlcNAc...) asparagine glycan. The segment at 78 to 115 (TYAQGFTGRFVFSMDTSASTAYLQISSLKAEDMAMYYC) is framework-3. The interval 116–117 (AR) is complementarity-determining-3.

Immunoglobulins are composed of two identical heavy chains and two identical light chains; disulfide-linked.

It is found in the secreted. Its subcellular location is the cell membrane. In terms of biological role, probable non-functional open reading frame (ORF) of V region of the variable domain of immunoglobulin heavy chains. Non-functional ORF generally cannot participate in the synthesis of a productive immunoglobulin chain due to altered V-(D)-J or switch recombination and/or splicing site (at mRNA level) and/or conserved amino acid change (protein level). Immunoglobulins, also known as antibodies, are membrane-bound or secreted glycoproteins produced by B lymphocytes. In the recognition phase of humoral immunity, the membrane-bound immunoglobulins serve as receptors which, upon binding of a specific antigen, trigger the clonal expansion and differentiation of B lymphocytes into immunoglobulins-secreting plasma cells. Secreted immunoglobulins mediate the effector phase of humoral immunity, which results in the elimination of bound antigens. The antigen binding site is formed by the variable domain of one heavy chain, together with that of its associated light chain. Thus, each immunoglobulin has two antigen binding sites with remarkable affinity for a particular antigen. The variable domains are assembled by a process called V-(D)-J rearrangement and can then be subjected to somatic hypermutations which, after exposure to antigen and selection, allow affinity maturation for a particular antigen. The chain is Probable non-functional immunoglobulin heavy variable 7-81 from Homo sapiens (Human).